The following is a 343-amino-acid chain: L-threonine 3-dehydrogenase (343 aa).

Position 38 (cysteine 38) interacts with Zn(2+). Residues threonine 40 and histidine 43 each act as charge relay system in the active site. Zn(2+)-binding residues include histidine 63, glutamate 64, cysteine 93, cysteine 96, cysteine 99, and cysteine 107. Residues isoleucine 175, aspartate 195, arginine 200, 262-264, and 286-287 contribute to the NAD(+) site; these read LGI and IY.

Belongs to the zinc-containing alcohol dehydrogenase family. In terms of assembly, homotetramer. Zn(2+) is required as a cofactor.

It is found in the cytoplasm. The enzyme catalyses L-threonine + NAD(+) = (2S)-2-amino-3-oxobutanoate + NADH + H(+). The protein operates within amino-acid degradation; L-threonine degradation via oxydo-reductase pathway; glycine from L-threonine: step 1/2. Catalyzes the NAD(+)-dependent oxidation of L-threonine to 2-amino-3-ketobutyrate. The polypeptide is L-threonine 3-dehydrogenase (Burkholderia mallei (strain NCTC 10247)).